The sequence spans 330 residues: Glycoprotein integral membrane protein 1 (330 aa).

An N-terminal signal peptide occupies residues 1–23; that stretch reads MEGAPLGPLALRLLLFVALPASG. Over 24–268 the chain is Extracellular; the sequence is WLTTGAPEPP…VFPVFFQFLN (245 aa). N-linked (GlcNAc...) asparagine glycosylation is found at Asn46, Asn64, Asn166, and Asn191. A helical transmembrane segment spans residues 269–289; it reads IMVVGITGAAVVITILKVLFP. The Cytoplasmic segment spans residues 290–330; sequence VSEYKGILQLDKVDVIPVTAINLYPDGPEKTAENLEDKTCI.

It localises to the membrane. The chain is Glycoprotein integral membrane protein 1 (GINM1) from Pongo abelii (Sumatran orangutan).